The following is a 430-amino-acid chain: Trigger factor (430 aa).

The 86-residue stretch at 164 to 249 folds into the PPIase FKBP-type domain; the sequence is DDWAVIDHEG…LKALKTRQLP (86 aa).

It belongs to the FKBP-type PPIase family. Tig subfamily.

The protein localises to the cytoplasm. The catalysed reaction is [protein]-peptidylproline (omega=180) = [protein]-peptidylproline (omega=0). Its function is as follows. Involved in protein export. Acts as a chaperone by maintaining the newly synthesized protein in an open conformation. Functions as a peptidyl-prolyl cis-trans isomerase. The protein is Trigger factor of Anaeromyxobacter sp. (strain Fw109-5).